The following is a 214-amino-acid chain: tRNA (guanine-N(7)-)-methyltransferase (214 aa).

S-adenosyl-L-methionine is bound by residues E43, E68, D95, and D117. D117 is an active-site residue. Residues K121, D153, and 190-193 each bind substrate; that span reads TEYE.

Belongs to the class I-like SAM-binding methyltransferase superfamily. TrmB family.

The catalysed reaction is guanosine(46) in tRNA + S-adenosyl-L-methionine = N(7)-methylguanosine(46) in tRNA + S-adenosyl-L-homocysteine. It participates in tRNA modification; N(7)-methylguanine-tRNA biosynthesis. Its function is as follows. Catalyzes the formation of N(7)-methylguanine at position 46 (m7G46) in tRNA. The polypeptide is tRNA (guanine-N(7)-)-methyltransferase (Staphylococcus aureus (strain JH1)).